The sequence spans 448 residues: tRNA modification GTPase MnmE (448 aa).

(6S)-5-formyl-5,6,7,8-tetrahydrofolate contacts are provided by R24, E81, and K120. Positions 216 to 373 constitute a TrmE-type G domain; it reads GLNVVLVGAP…LKRTLLREAG (158 aa). Residue N226 participates in K(+) binding. GTP contacts are provided by residues 226–231, 245–251, and 270–273; these read NVGKSS, TDIAGTT, and DTAG. Residue S230 participates in Mg(2+) binding. Positions 245, 247, and 250 each coordinate K(+). Position 251 (T251) interacts with Mg(2+). K448 is a (6S)-5-formyl-5,6,7,8-tetrahydrofolate binding site.

Belongs to the TRAFAC class TrmE-Era-EngA-EngB-Septin-like GTPase superfamily. TrmE GTPase family. In terms of assembly, homodimer. Heterotetramer of two MnmE and two MnmG subunits. Requires K(+) as cofactor.

The protein resides in the cytoplasm. In terms of biological role, exhibits a very high intrinsic GTPase hydrolysis rate. Involved in the addition of a carboxymethylaminomethyl (cmnm) group at the wobble position (U34) of certain tRNAs, forming tRNA-cmnm(5)s(2)U34. In Neisseria meningitidis serogroup A / serotype 4A (strain DSM 15465 / Z2491), this protein is tRNA modification GTPase MnmE.